The chain runs to 406 residues: E3 ubiquitin-protein ligase RING1 (406 aa).

Threonine 24 carries the post-translational modification Phosphothreonine. Residues 30-234 (MDGTEIAVSP…GGAGSEDSGD (205 aa)) form a necessary for transcriptional repression region. Serine 38 is modified (phosphoserine). An RING-type zinc finger spans residues 48–88 (CPICLDMLKNTMTTKECLHRFCSDCIVTALRSGNKECPTCR). Serine 140, serine 187, and serine 190 each carry phosphoserine. Disordered regions lie at residues 151–263 (HRAQ…GEIE) and 309–354 (QQQE…PSLE). Over residues 175 to 187 (EPGEGEGDGEDVS) the composition is skewed to acidic residues. The Nuclear localization signal motif lies at 201 to 204 (KRPR). Residues 214-228 (GTGGGAAGGACGGAG) show a composition bias toward gly residues. Threonine 215 is subject to Phosphothreonine. Phosphoserine occurs at positions 229 and 232. Residues 230–406 (EDSGDRGGTL…LCYAPTKDPK (177 aa)) form a necessary for interaction with CBX2 region. Positions 235-244 (RGGTLGGGTL) are enriched in gly residues. Pro residues predominate over residues 246–258 (PPSPPGAPSPPEP). Phosphoserine occurs at positions 248 and 254. The span at 317–343 (GGPGGGASDTGGPDGGGGERGVAGGGE) shows a compositional bias: gly residues.

As to quaternary structure, component of chromatin-associated Polycomb (PcG) complexes. Part of the E2F6.com-1 complex in G0 phase composed of E2F6, MGA, MAX, TFDP1, CBX3, BAT8, EUHMTASE1, RING1, RNF2/RING2 MBLR, L3MBTL2 and YAF2. Interacts with CBX2 and PCGF6. Component of a PRC1-like complex. Component of repressive BCOR complex containing Polycomb group subcomplex at least composed of RYBP, PCGF1, BCOR and RNF2/RING2. Interacts with PHC2, PCGF2, RNF2; CBX6, CBX7 and CBX8. Interacts with BMI1. Interacts with MN1. Interacts with USP26.

It is found in the nucleus speckle. The enzyme catalyses S-ubiquitinyl-[E2 ubiquitin-conjugating enzyme]-L-cysteine + [acceptor protein]-L-lysine = [E2 ubiquitin-conjugating enzyme]-L-cysteine + N(6)-ubiquitinyl-[acceptor protein]-L-lysine.. The protein operates within protein modification; protein ubiquitination. Its function is as follows. Constitutes one of the E3 ubiquitin-protein ligases that mediate monoubiquitination of 'Lys-119' of histone H2A, thereby playing a central role in histone code and gene regulation. H2A 'Lys-119' ubiquitination gives a specific tag for epigenetic transcriptional repression and participates in X chromosome inactivation of female mammals. Essential component of a Polycomb group (PcG) multiprotein PRC1-like complex, a complex class required to maintain the transcriptionally repressive state of many genes, including Hox genes, throughout development. PcG PRC1 complex acts via chromatin remodeling and modification of histones, rendering chromatin heritably changed in its expressibility. Compared to RNF2/RING2, it does not have the main E3 ubiquitin ligase activity on histone H2A, and it may rather act as a modulator of RNF2/RING2 activity. The chain is E3 ubiquitin-protein ligase RING1 from Mus musculus (Mouse).